The primary structure comprises 499 residues: Probable cytosol aminopeptidase (499 aa).

Lys-267 and Asp-272 together coordinate Mn(2+). Lys-279 is a catalytic residue. The Mn(2+) site is built by Asp-290, Asp-349, and Glu-351. Arg-353 is an active-site residue.

This sequence belongs to the peptidase M17 family. Requires Mn(2+) as cofactor.

It localises to the cytoplasm. The enzyme catalyses Release of an N-terminal amino acid, Xaa-|-Yaa-, in which Xaa is preferably Leu, but may be other amino acids including Pro although not Arg or Lys, and Yaa may be Pro. Amino acid amides and methyl esters are also readily hydrolyzed, but rates on arylamides are exceedingly low.. It carries out the reaction Release of an N-terminal amino acid, preferentially leucine, but not glutamic or aspartic acids.. Functionally, presumably involved in the processing and regular turnover of intracellular proteins. Catalyzes the removal of unsubstituted N-terminal amino acids from various peptides. The chain is Probable cytosol aminopeptidase from Buchnera aphidicola subsp. Acyrthosiphon pisum (strain Tuc7).